The sequence spans 160 residues: Phosphopantetheine adenylyltransferase (160 aa).

Thr-9 is a substrate binding site. ATP is bound by residues 9–10 (TF) and His-17. Positions 41, 73, and 87 each coordinate substrate. Residues 88 to 90 (GLR), Glu-98, and 123 to 129 (FSYTSSS) contribute to the ATP site.

This sequence belongs to the bacterial CoaD family. Homohexamer. Mg(2+) serves as cofactor.

The protein localises to the cytoplasm. It catalyses the reaction (R)-4'-phosphopantetheine + ATP + H(+) = 3'-dephospho-CoA + diphosphate. Its pathway is cofactor biosynthesis; coenzyme A biosynthesis; CoA from (R)-pantothenate: step 4/5. In terms of biological role, reversibly transfers an adenylyl group from ATP to 4'-phosphopantetheine, yielding dephospho-CoA (dPCoA) and pyrophosphate. The sequence is that of Phosphopantetheine adenylyltransferase from Opitutus terrae (strain DSM 11246 / JCM 15787 / PB90-1).